The sequence spans 1975 residues: Cadherin-87A (1975 aa).

Residues 1–17 (MKLPLGLLMICLGLTLA) form the signal peptide. The Extracellular segment spans residues 18–1775 (KGETNLPPVF…AIVQDEFDLA (1758 aa)). Cadherin domains are found at residues 28 to 132 (TQTL…PPEF), 133 to 245 (QNTP…PPVF), 246 to 358 (QGSL…PPVF), 359 to 472 (NHKE…KPVF), 473 to 669 (EQES…PPVC), 670 to 774 (ESPL…VPNF), 775 to 878 (EQQS…DPYF), 879 to 998 (VPAT…PPRF), 999 to 1103 (NAPW…DPKF), 1104 to 1211 (SQSD…APVF), 1212 to 1318 (TRDV…KPEF), 1319 to 1431 (VIPA…RPEF), 1432 to 1553 (PDAS…PPVF), and 1554 to 1677 (EKPI…PPEE). 3 N-linked (GlcNAc...) asparagine glycosylation sites follow: Asn-39, Asn-77, and Asn-203. An N-linked (GlcNAc...) asparagine glycan is attached at Asn-424. Positions 535–560 (CHDNGESNRRERRDLNEDEHVEEDDG) are disordered. Positions 537 to 549 (DNGESNRRERRDL) are enriched in basic and acidic residues. The segment covering 550–560 (NEDEHVEEDDG) has biased composition (acidic residues). 2 N-linked (GlcNAc...) asparagine glycosylation sites follow: Asn-730 and Asn-761. Asn-1039, Asn-1049, Asn-1111, Asn-1163, Asn-1217, Asn-1325, Asn-1349, Asn-1492, Asn-1576, and Asn-1691 each carry an N-linked (GlcNAc...) asparagine glycan. A helical membrane pass occupies residues 1776 to 1796 (VAGLVALVIVLFVGVISFIVL). Residues 1797–1975 (CCCLKHWNLS…DGDDAVAELI (179 aa)) are Cytoplasmic-facing. Over residues 1887 to 1899 (YATIQPRNNQNRL) the composition is skewed to polar residues. The disordered stretch occupies residues 1887–1916 (YATIQPRNNQNRLTGGGGAGGGSMRSGGGA). Gly residues predominate over residues 1900–1916 (TGGGGAGGGSMRSGGGA).

It is found in the cell membrane. In terms of biological role, cadherins are calcium-dependent cell adhesion proteins. They preferentially interact with themselves in a homophilic manner in connecting cells. This is Cadherin-87A (Cad87A) from Drosophila melanogaster (Fruit fly).